Here is a 506-residue protein sequence, read N- to C-terminus: Arabinose import ATP-binding protein AraG (506 aa).

ABC transporter domains are found at residues 10–245 (LEFC…MVGR) and 253–501 (YRSR…MLGN). Position 42–49 (42–49 (GENGAGKS)) interacts with ATP.

This sequence belongs to the ABC transporter superfamily. Arabinose importer (TC 3.A.1.2.2) family. The complex is composed of two ATP-binding proteins (AraG), two transmembrane proteins (AraH) and a solute-binding protein (AraF).

The protein localises to the cell inner membrane. The catalysed reaction is L-arabinose(out) + ATP + H2O = L-arabinose(in) + ADP + phosphate + H(+). Its function is as follows. Part of the ABC transporter complex AraFGH involved in arabinose import. Responsible for energy coupling to the transport system. The sequence is that of Arabinose import ATP-binding protein AraG from Vibrio parahaemolyticus serotype O3:K6 (strain RIMD 2210633).